The primary structure comprises 886 residues: DNA double-strand break repair Rad50 ATPase (886 aa).

ATP-binding positions include Arg-13, 33–39 (NGAGKSS), and Gln-128. Coiled coils occupy residues 183–360 (EQIK…LLET) and 400–433 (KEIT…LKSA). In terms of domain architecture, Zinc-hook spans 392-489 (LSKAKEEEKE…RLEKVEKALE (98 aa)). Residues Cys-437 and Cys-440 each coordinate Zn(2+). 2 coiled-coil regions span residues 489 to 518 (EKQE…DAEK) and 545 to 713 (SSAS…KKVE). 792 to 797 (FLSGGE) is a binding site for ATP.

It belongs to the SMC family. RAD50 subfamily. Homodimer. Forms a heterotetramer composed of two Mre11 subunits and two Rad50 subunits. It depends on Zn(2+) as a cofactor.

Functionally, part of the Rad50/Mre11 complex, which is involved in the early steps of DNA double-strand break (DSB) repair. The complex may facilitate opening of the processed DNA ends to aid in the recruitment of HerA and NurA. Rad50 controls the balance between DNA end bridging and DNA resection via ATP-dependent structural rearrangements of the Rad50/Mre11 complex. The sequence is that of DNA double-strand break repair Rad50 ATPase from Archaeoglobus fulgidus (strain ATCC 49558 / DSM 4304 / JCM 9628 / NBRC 100126 / VC-16).